The sequence spans 395 residues: ATP phosphoribosyltransferase regulatory subunit (395 aa).

Belongs to the class-II aminoacyl-tRNA synthetase family. HisZ subfamily. In terms of assembly, heteromultimer composed of HisG and HisZ subunits.

It localises to the cytoplasm. It participates in amino-acid biosynthesis; L-histidine biosynthesis; L-histidine from 5-phospho-alpha-D-ribose 1-diphosphate: step 1/9. In terms of biological role, required for the first step of histidine biosynthesis. May allow the feedback regulation of ATP phosphoribosyltransferase activity by histidine. The chain is ATP phosphoribosyltransferase regulatory subunit from Pseudomonas syringae pv. syringae (strain B728a).